The primary structure comprises 128 residues: Large ribosomal subunit protein bL12 (128 aa).

Belongs to the bacterial ribosomal protein bL12 family. In terms of assembly, homodimer. Part of the ribosomal stalk of the 50S ribosomal subunit. Forms a multimeric L10(L12)X complex, where L10 forms an elongated spine to which 2 to 4 L12 dimers bind in a sequential fashion. Binds GTP-bound translation factors.

Functionally, forms part of the ribosomal stalk which helps the ribosome interact with GTP-bound translation factors. Is thus essential for accurate translation. The chain is Large ribosomal subunit protein bL12 from Sorangium cellulosum (strain So ce56) (Polyangium cellulosum (strain So ce56)).